The following is a 911-amino-acid chain: Protein translocase subunit SecA (911 aa).

ATP-binding positions include Q90, 108–112, and D515; that span reads GEGKT. 4 residues coordinate Zn(2+): C891, C893, C902, and H903.

This sequence belongs to the SecA family. In terms of assembly, monomer and homodimer. Part of the essential Sec protein translocation apparatus which comprises SecA, SecYEG and auxiliary proteins SecDF-YajC and YidC. It depends on Zn(2+) as a cofactor.

It localises to the cell inner membrane. Its subcellular location is the cytoplasm. It carries out the reaction ATP + H2O + cellular proteinSide 1 = ADP + phosphate + cellular proteinSide 2.. Its function is as follows. Part of the Sec protein translocase complex. Interacts with the SecYEG preprotein conducting channel. Has a central role in coupling the hydrolysis of ATP to the transfer of proteins into and across the cell membrane, serving both as a receptor for the preprotein-SecB complex and as an ATP-driven molecular motor driving the stepwise translocation of polypeptide chains across the membrane. This is Protein translocase subunit SecA from Blochmanniella pennsylvanica (strain BPEN).